A 292-amino-acid chain; its full sequence is Glycine--tRNA ligase alpha subunit (292 aa).

The protein belongs to the class-II aminoacyl-tRNA synthetase family. Tetramer of two alpha and two beta subunits.

It localises to the cytoplasm. It catalyses the reaction tRNA(Gly) + glycine + ATP = glycyl-tRNA(Gly) + AMP + diphosphate. In Clostridioides difficile (strain 630) (Peptoclostridium difficile), this protein is Glycine--tRNA ligase alpha subunit.